A 152-amino-acid chain; its full sequence is MSCMGAAVNIITTDGPSGRAGFTASAVCSVTDTPPTLLVCLNRGASVWPVFNENRTLCVNTLSAGQEPLSNLFGGKTPMEHRFAAARWQTGVTGCPQLEEALVSFDCRISQVVSVGTHDILFCAIEAIHRHTTPYGLVWFDRSYHALMRPAC.

It belongs to the non-flavoprotein flavin reductase family. RutF subfamily.

It carries out the reaction FMNH2 + NAD(+) = FMN + NADH + 2 H(+). In terms of biological role, catalyzes the reduction of FMN to FMNH2 which is used to reduce pyrimidine by RutA via the Rut pathway. The protein is FMN reductase (NADH) RutF of Shigella sonnei (strain Ss046).